A 766-amino-acid polypeptide reads, in one-letter code: Pyrophosphate-energized vacuolar membrane proton pump (766 aa).

Residues 2-8 lie on the Intravacuolar side of the membrane; it reads GAAILPD. The helical transmembrane segment at 9 to 35 threads the bilayer; that stretch reads LGTEILIPVCAVIGIAFALFQWLLVSK. Topologically, residues 36-84 are cytoplasmic; that stretch reads VKLSAVRDASPNAAAKNGYNDYLIEEEEGINDHNVVVKCAEIQNAISEG. Residues 85-114 traverse the membrane as a helical segment; that stretch reads ATSFLFTEYKYVGIFMVAFAILIFLFLGSV. The Intravacuolar portion of the chain corresponds to 115-135; that stretch reads EGFSTSPQACSYDKTKTCKPA. Cys-124 and Cys-132 are disulfide-bonded. The chain crosses the membrane as a helical span at residues 136–163; that stretch reads LATAIFSTVSFLLGGVTSLVSGFLGMKI. Over 164-186 the chain is Cytoplasmic; that stretch reads ATYANARTTLEARKGVGKAFITA. The helical transmembrane segment at 187–216 threads the bilayer; that stretch reads FRSGAVMGFLLAANGLLVLYIAINLFKIYY. Over 217–219 the chain is Intravacuolar; the sequence is GDD. A helical membrane pass occupies residues 220-248; the sequence is WGGLFEAITGYGLGGSSMALFGRVGGGIY. The Cytoplasmic segment spans residues 249 to 286; the sequence is TKAADVGADLVGKVERNIPEDDPRNPAVIADNVGDNVG. Lys-250 contacts substrate. Mg(2+) contacts are provided by Asp-253, Asp-257, and Asp-283. Residues 287–312 form a helical membrane-spanning segment; sequence DIAGMGSDLFGSYAESSCAALVVASI. At 313–320 the chain is on the intravacuolar side; the sequence is SSFGLNHE. The helical transmembrane segment at 321 to 346 threads the bilayer; that stretch reads LTAMLYPLIVSSVGILVCLLTTLFAT. The Cytoplasmic portion of the chain corresponds to 347–354; it reads DFFEIKAV. A helical membrane pass occupies residues 355 to 382; sequence KEIEPALKKQLVISTVLMTIGVAVVSFV. Residues 383 to 401 are Intravacuolar-facing; it reads ALPTSFTIFNFGVQKDVKS. The chain crosses the membrane as a helical span at residues 402–425; the sequence is WQLFLCVAVGLWAGLIIGFVTEYY. Topologically, residues 426–447 are cytoplasmic; that stretch reads TSNAYSPVQDVADSCRTGAATN. The helical transmembrane segment at 448 to 472 threads the bilayer; that stretch reads VIFGLALGYKSVIIPIFAIAISIFV. Residues 473 to 478 are Intravacuolar-facing; that stretch reads SFTFAA. A helical membrane pass occupies residues 479–505; that stretch reads MYGIAVAALGMLSTIATGLAIDAYGPI. The Cytoplasmic portion of the chain corresponds to 506-534; it reads SDNAGGIAEMAGMSHRIRERTDALDAAGN. 2 residues coordinate Mg(2+): Asp-507 and Asn-534. Residues 535 to 563 form a helical membrane-spanning segment; it reads TTAAIGKGFAIGSAALVSLALFGAFVSRA. Over 564–573 the chain is Intravacuolar; the sequence is SITTVDVLTP. A helical transmembrane segment spans residues 574 to 602; it reads KVFIGLIVGAMLPYWFSAMTMKSVGSAAL. At 603 to 631 the chain is on the cytoplasmic side; it reads KMVEEVRRQFNTIPGLMEGTAKPDYATCV. The chain crosses the membrane as a helical span at residues 632 to 660; sequence KISTDASIKEMIPPGALVMLTPLVVGILF. Residue Gly-661 is a topological domain, intravacuolar. A helical membrane pass occupies residues 662 to 689; sequence VETLSGVLAGSLVSGVQIAISASNTGGA. Over 690-732 the chain is Cytoplasmic; the sequence is WDNAKKYIEAGASEHARSLGPKGSDCHKAAVIGDTIGDPLKDT. Mg(2+)-binding residues include Asp-691 and Asp-727. Substrate is bound at residue Lys-730. The helical transmembrane segment at 733–758 threads the bilayer; that stretch reads SGPSLNILIKLMAVESLVFAPFFATH. Over 759–765 the chain is Intravacuolar; it reads GGLLFKI.

It belongs to the H(+)-translocating pyrophosphatase (TC 3.A.10) family. K(+)-stimulated subfamily. In terms of assembly, homodimer.

The protein resides in the vacuole membrane. It catalyses the reaction diphosphate + H2O + H(+)(in) = 2 phosphate + 2 H(+)(out). Inhibited by excess pyrophosphate as well as excess Mg(2+). Inhibition by ATP, GTP, and CTP is reversed by increasing the Mg(2+) concentration. This suggests that the substrate is a particular metal complex such as MgPPi(2-). Modification of Asp-283 with DCCD abolishes pyrophosphatase activity. Proton-translocating inorganic pyrophosphatase that contributes to the transtonoplast (from cytosol to vacuole lumen) H(+)-electrochemical potential difference. It establishes a proton gradient of similar and often greater magnitude than the H(+)-ATPase on the same membrane. This chain is Pyrophosphate-energized vacuolar membrane proton pump, found in Vigna radiata var. radiata (Mung bean).